The primary structure comprises 958 residues: Collagen alpha-1(I) chain (958 aa).

The tract at residues 1 to 958 is disordered; sequence GPMGPSGPRG…PGPPGPPGPP (958 aa). The segment covering 50–64 has biased composition (basic and acidic residues); the sequence is NGDDGEAGKPGRPGE. Ser-92 is modified (phosphoserine). Composition is skewed to low complexity over residues 100-116 and 139-152; these read DAGP…PGEN and PAGA…TGAA. The segment covering 154–166 has biased composition (pro residues); that stretch reads PPGPTGPAGPPGF. Low complexity predominate over residues 216 to 232; sequence APGIAGAPGFPGARGPS. A compositionally biased stretch (gly residues) spans 294–303; sequence GERGGPGSRG. 8 stretches are compositionally biased toward low complexity: residues 304–335, 347–373, 382–401, 557–571, 584–614, 640–656, 685–694, and 704–728; these read FPGS…PGEA, KGIT…QDGR, ARGQ…AGEP, SGPS…ARGA, AGFA…AGPA, SAGP…AGRV, ETGPAGRPGE, and AGEK…QGIA. Ser-560 bears the Phosphoserine mark. 2 stretches are compositionally biased toward pro residues: residues 769 to 779 and 808 to 823; these read PPGPVGPPGIA and AGPP…PGPV. Residues 859–873 show a composition bias toward basic and acidic residues; that stretch reads RGDKGETGEQGDRGI. The span at 892–925 shows a compositional bias: low complexity; the sequence is PGEQGPSGASGPAGPRGPPGSAGAPGKDGINGIP. Positions 943 to 958 are enriched in pro residues; that stretch reads VGPPGPPGPPGPPGPP.

It belongs to the fibrillar collagen family. Trimers of one alpha 2(I) and two alpha 1(I) chains. Prolines at the third position of the tripeptide repeating unit (G-X-Y) are hydroxylated in some or all of the chains. In terms of tissue distribution, forms the fibrils of tendon, ligaments and bones. In bones, the fibrils are mineralized with calcium hydroxyapatite.

The protein resides in the secreted. It is found in the extracellular space. It localises to the extracellular matrix. Its function is as follows. Type I collagen is a member of group I collagen (fibrillar forming collagen). The polypeptide is Collagen alpha-1(I) chain (Macrauchenia sp).